A 553-amino-acid polypeptide reads, in one-letter code: Putative transport protein YidE (553 aa).

The next 5 helical transmembrane spans lie at 4–24, 28–48, 65–85, 95–115, and 158–178; these read IALT…IGNV, GVGL…HFVS, FGLI…FFAS, LFAV…HKLF, and MSYA…MWML. RCK C-terminal domains are found at residues 191–276 and 279–361; these read QQHE…VIGQ and DTSL…VLGN. 6 consecutive transmembrane segments (helical) span residues 371–391, 393–413, 439–459, 464–484, 493–513, and 533–553; these read MLPV…PVFV, GFPA…ALIL, IVLF…HTLV, LSWI…VGIL, YLTM…LAFA, and LVMF…WSIG.

Belongs to the AAE transporter (TC 2.A.81) family. YidE subfamily.

Its subcellular location is the cell membrane. The chain is Putative transport protein YidE from Escherichia coli O6:K15:H31 (strain 536 / UPEC).